The primary structure comprises 253 residues: Lys-63-specific deubiquitinase BRCC36 (253 aa).

The 137-residue stretch at valine 9–phenylalanine 145 folds into the MPN domain. Zn(2+) contacts are provided by histidine 94, histidine 96, and aspartate 107. Residues histidine 94 to aspartate 107 carry the JAMM motif motif. Residues glutamate 227–lysine 249 adopt a coiled-coil conformation.

It belongs to the peptidase M67A family. BRCC36 subfamily. In terms of assembly, component of the BRISC complex, at least composed of ABRAXAS2, BRCC3/BRCC36, BABAM2 and BABAM1/NBA1. Within the complex, interacts directly with ABRAXAS2. The heterodimer with ABRAXAS2 assembles into a heterotetramer. The BRISC complex binds polyubiquitin. The cofactor is Zn(2+).

The protein localises to the cytoplasm. It is found in the nucleus. Its subcellular location is the cytoskeleton. It localises to the spindle pole. Its function is as follows. Metalloprotease that specifically cleaves 'Lys-63'-linked polyubiquitin chains, leaving the last ubiquitin chain attached to its substrates. Catalytic subunit of the BRISC complex; does not have activity by itself, but needs to be associated into a heterotetramer with ABRAXAS2 for minimal in vitro activity. Plays a role in regulating the onset of apoptosis via its role in modulating 'Lys-63'-linked ubiquitination of target proteins. Required for normal mitotic spindle assembly and microtubule attachment to kinetochores via its role in deubiquitinating spindle assembly factors. This is Lys-63-specific deubiquitinase BRCC36 from Camponotus floridanus (Florida carpenter ant).